The primary structure comprises 388 residues: Alanine racemase 1 (388 aa).

The Proton acceptor; specific for D-alanine role is filled by K40. K40 carries the post-translational modification N6-(pyridoxal phosphate)lysine. Position 138 (R138) interacts with substrate. Catalysis depends on Y268, which acts as the Proton acceptor; specific for L-alanine. A substrate-binding site is contributed by M316.

Belongs to the alanine racemase family. Requires pyridoxal 5'-phosphate as cofactor.

The enzyme catalyses L-alanine = D-alanine. The protein operates within amino-acid biosynthesis; D-alanine biosynthesis; D-alanine from L-alanine: step 1/1. Catalyzes the interconversion of L-alanine and D-alanine. May also act on other amino acids. This Caldanaerobacter subterraneus subsp. tengcongensis (strain DSM 15242 / JCM 11007 / NBRC 100824 / MB4) (Thermoanaerobacter tengcongensis) protein is Alanine racemase 1 (alr1).